We begin with the raw amino-acid sequence, 211 residues long: MRTFPGGVYALTRETPDTERLLAEVEAALAGGVAAVQYRDKSGDVAQRHAQASELAALCRRFGVPLIVNDDLRLADLAGADGVHLGRDDASIREARIILGPAKFVGASCYQSLDLARAAQTAGADYVAFGSFYPSPTKPAAARADVALLARASRHIALPVVAIGGITAANAAPLIDAGADSLAVLSALFDAPDVRRAAAELNRLFAAEPEE.

4-amino-2-methyl-5-(diphosphooxymethyl)pyrimidine contacts are provided by residues 37–41 (QYRDK) and N69. D70 and D89 together coordinate Mg(2+). S108 contacts 4-amino-2-methyl-5-(diphosphooxymethyl)pyrimidine. Residue 135–137 (SPT) coordinates 2-[(2R,5Z)-2-carboxy-4-methylthiazol-5(2H)-ylidene]ethyl phosphate. K138 is a binding site for 4-amino-2-methyl-5-(diphosphooxymethyl)pyrimidine. 2-[(2R,5Z)-2-carboxy-4-methylthiazol-5(2H)-ylidene]ethyl phosphate contacts are provided by residues G165 and 185–186 (LS).

This sequence belongs to the thiamine-phosphate synthase family. The cofactor is Mg(2+).

The catalysed reaction is 2-[(2R,5Z)-2-carboxy-4-methylthiazol-5(2H)-ylidene]ethyl phosphate + 4-amino-2-methyl-5-(diphosphooxymethyl)pyrimidine + 2 H(+) = thiamine phosphate + CO2 + diphosphate. It catalyses the reaction 2-(2-carboxy-4-methylthiazol-5-yl)ethyl phosphate + 4-amino-2-methyl-5-(diphosphooxymethyl)pyrimidine + 2 H(+) = thiamine phosphate + CO2 + diphosphate. It carries out the reaction 4-methyl-5-(2-phosphooxyethyl)-thiazole + 4-amino-2-methyl-5-(diphosphooxymethyl)pyrimidine + H(+) = thiamine phosphate + diphosphate. It functions in the pathway cofactor biosynthesis; thiamine diphosphate biosynthesis; thiamine phosphate from 4-amino-2-methyl-5-diphosphomethylpyrimidine and 4-methyl-5-(2-phosphoethyl)-thiazole: step 1/1. Functionally, condenses 4-methyl-5-(beta-hydroxyethyl)thiazole monophosphate (THZ-P) and 2-methyl-4-amino-5-hydroxymethyl pyrimidine pyrophosphate (HMP-PP) to form thiamine monophosphate (TMP). The protein is Thiamine-phosphate synthase of Thiobacillus denitrificans (strain ATCC 25259 / T1).